The sequence spans 128 residues: MLGVLLVLHGSKIPEWKDVGIKYAEYLSKYFSLVEFGFLEFNKPTLSEALSNLLAKGADKIVVVPLLFATGTHFRRDIPRLLGIDNDEKKIRYMGREIEITIADPLGFDEKIGEVLVKRVNETYNKNY.

The active-site Proton acceptor is the His9. His9 contributes to the Co(2+) binding site. Substrate is bound by residues Lys43 and 68–73 (FATGTH). His73 is a Co(2+) binding site.

Belongs to the CbiX family. CbiXS subfamily. As to quaternary structure, homotetramer; dimer of dimers.

It catalyses the reaction Co-sirohydrochlorin + 2 H(+) = sirohydrochlorin + Co(2+). Its pathway is cofactor biosynthesis; adenosylcobalamin biosynthesis; cob(II)yrinate a,c-diamide from sirohydrochlorin (anaerobic route): step 1/10. Its function is as follows. Catalyzes the insertion of Co(2+) into sirohydrochlorin as part of the anaerobic pathway to cobalamin biosynthesis. This is Sirohydrochlorin cobaltochelatase from Saccharolobus solfataricus (strain ATCC 35092 / DSM 1617 / JCM 11322 / P2) (Sulfolobus solfataricus).